The chain runs to 378 residues: 3-dehydroquinate synthase (378 aa).

Residues 111–115, 135–136, K148, and K157 contribute to the NAD(+) site; these read GVIGD and TS. Zn(2+) contacts are provided by E190, H252, and H271.

Belongs to the sugar phosphate cyclases superfamily. Dehydroquinate synthase family. Requires NAD(+) as cofactor. The cofactor is Co(2+). Zn(2+) is required as a cofactor.

It localises to the cytoplasm. It catalyses the reaction 7-phospho-2-dehydro-3-deoxy-D-arabino-heptonate = 3-dehydroquinate + phosphate. It functions in the pathway metabolic intermediate biosynthesis; chorismate biosynthesis; chorismate from D-erythrose 4-phosphate and phosphoenolpyruvate: step 2/7. Catalyzes the conversion of 3-deoxy-D-arabino-heptulosonate 7-phosphate (DAHP) to dehydroquinate (DHQ). In Mesorhizobium japonicum (strain LMG 29417 / CECT 9101 / MAFF 303099) (Mesorhizobium loti (strain MAFF 303099)), this protein is 3-dehydroquinate synthase.